A 214-amino-acid chain; its full sequence is Phosphatidylserine decarboxylase proenzyme (214 aa).

Ser-183 acts as the Schiff-base intermediate with substrate; via pyruvic acid in catalysis. Ser-183 carries the post-translational modification Pyruvic acid (Ser); by autocatalysis.

It belongs to the phosphatidylserine decarboxylase family. PSD-A subfamily. In terms of assembly, heterodimer of a large membrane-associated beta subunit and a small pyruvoyl-containing alpha subunit. Pyruvate serves as cofactor. Post-translationally, is synthesized initially as an inactive proenzyme. Formation of the active enzyme involves a self-maturation process in which the active site pyruvoyl group is generated from an internal serine residue via an autocatalytic post-translational modification. Two non-identical subunits are generated from the proenzyme in this reaction, and the pyruvate is formed at the N-terminus of the alpha chain, which is derived from the carboxyl end of the proenzyme. The post-translation cleavage follows an unusual pathway, termed non-hydrolytic serinolysis, in which the side chain hydroxyl group of the serine supplies its oxygen atom to form the C-terminus of the beta chain, while the remainder of the serine residue undergoes an oxidative deamination to produce ammonia and the pyruvoyl prosthetic group on the alpha chain.

It is found in the cell membrane. It catalyses the reaction a 1,2-diacyl-sn-glycero-3-phospho-L-serine + H(+) = a 1,2-diacyl-sn-glycero-3-phosphoethanolamine + CO2. Its pathway is phospholipid metabolism; phosphatidylethanolamine biosynthesis; phosphatidylethanolamine from CDP-diacylglycerol: step 2/2. In terms of biological role, catalyzes the formation of phosphatidylethanolamine (PtdEtn) from phosphatidylserine (PtdSer). This is Phosphatidylserine decarboxylase proenzyme from Desulfotalea psychrophila (strain LSv54 / DSM 12343).